Reading from the N-terminus, the 172-residue chain is Small ribosomal subunit protein uS5 (172 aa).

Positions 16-79 (LKEKLVHINR…EDGKKNVVKV (64 aa)) constitute an S5 DRBM domain.

The protein belongs to the universal ribosomal protein uS5 family. As to quaternary structure, part of the 30S ribosomal subunit. Contacts proteins S4 and S8.

Its function is as follows. With S4 and S12 plays an important role in translational accuracy. In terms of biological role, located at the back of the 30S subunit body where it stabilizes the conformation of the head with respect to the body. The sequence is that of Small ribosomal subunit protein uS5 from Prosthecochloris aestuarii (strain DSM 271 / SK 413).